Consider the following 437-residue polypeptide: 3-deoxy-D-manno-octulosonic acid transferase (437 aa).

Residues 16 to 36 (VVLVCAFVIALPKLLYKMLVY) form a helical; Signal-anchor membrane-spanning segment. E70 acts as the Proton acceptor in catalysis. CMP-binding positions include 279-280 (PR), 319-321 (IGL), and 346-349 (NLLE).

This sequence belongs to the glycosyltransferase group 1 family. Glycosyltransferase 30 subfamily.

It is found in the cell inner membrane. The enzyme catalyses lipid IVA (E. coli) + CMP-3-deoxy-beta-D-manno-octulosonate = alpha-Kdo-(2-&gt;6)-lipid IVA (E. coli) + CMP + H(+). It catalyses the reaction alpha-Kdo-(2-&gt;6)-lipid IVA (E. coli) + CMP-3-deoxy-beta-D-manno-octulosonate = alpha-Kdo-(2-&gt;4)-alpha-Kdo-(2-&gt;6)-lipid IVA (E. coli) + CMP + H(+). The catalysed reaction is alpha-Kdo-(2-&gt;4)-alpha-Kdo-(2-&gt;6)-lipid IVA (E. coli) + CMP-3-deoxy-beta-D-manno-octulosonate = alpha-Kdo-(2-&gt;8)-alpha-Kdo-(2-&gt;4)-alpha-Kdo-(2-&gt;6)-lipid IVA (E. coli) + CMP + H(+). Its pathway is bacterial outer membrane biogenesis; LPS core biosynthesis. Functionally, involved in lipopolysaccharide (LPS) biosynthesis. Catalyzes the transfer of three 3-deoxy-D-manno-octulosonate (Kdo) residues from CMP-Kdo to lipid IV(A), the tetraacyldisaccharide-1,4'-bisphosphate precursor of lipid A. Thus generates the genus-specific LPS epitope of Chlamydia, composed of the trisaccharide alpha-Kdo-(2-&gt;8)-alpha-Kdo-(2-&gt;4)-alpha-Kdo. This chain is 3-deoxy-D-manno-octulosonic acid transferase (waaA), found in Chlamydia pneumoniae (Chlamydophila pneumoniae).